Consider the following 427-residue polypeptide: Histidinol dehydrogenase (427 aa).

Substrate is bound by residues S232, Q254, and H257. Residues Q254 and H257 each contribute to the Zn(2+) site. Active-site proton acceptor residues include E322 and H323. Substrate contacts are provided by H323, D356, E410, and H415. D356 serves as a coordination point for Zn(2+). Residue H415 participates in Zn(2+) binding.

It belongs to the histidinol dehydrogenase family. Requires Zn(2+) as cofactor.

It catalyses the reaction L-histidinol + 2 NAD(+) + H2O = L-histidine + 2 NADH + 3 H(+). It participates in amino-acid biosynthesis; L-histidine biosynthesis; L-histidine from 5-phospho-alpha-D-ribose 1-diphosphate: step 9/9. Its function is as follows. Catalyzes the sequential NAD-dependent oxidations of L-histidinol to L-histidinaldehyde and then to L-histidine. The protein is Histidinol dehydrogenase of Listeria monocytogenes serotype 4b (strain F2365).